The chain runs to 304 residues: Protein Largen (304 aa).

A compositionally biased stretch (low complexity) spans 1–22 (MSAKSKGNPSSSSAAEGPPAAS). Disordered stretches follow at residues 1 to 27 (MSAK…TKVK), 66 to 109 (QLED…PPAH), 114 to 133 (LTVL…TPVR), and 236 to 304 (EPVH…TTTV). A coiled-coil region spans residues 33–70 (IVEDLELVLGDLKDVAKELKEVVDQIDTLTSDLQLEDE). The segment covering 77-91 (TDTLNSSSSGTTASS) has biased composition (low complexity). 2 stretches are compositionally biased toward pro residues: residues 120-129 (PNPPPPPPRL) and 275-289 (FPPP…PAAP).

Functionally, regulator of cell size that promotes cell size increase independently of mTOR and Hippo signaling pathways. Acts by stimulating the translation of specific mRNAs, including those encoding proteins affecting mitochondrial functions. Increases mitochondrial mass and respiration. The polypeptide is Protein Largen (Prr16) (Mus musculus (Mouse)).